The primary structure comprises 171 residues: UPF0398 protein spyM18_1659 (171 aa).

The protein belongs to the UPF0398 family.

In Streptococcus pyogenes serotype M18 (strain MGAS8232), this protein is UPF0398 protein spyM18_1659.